We begin with the raw amino-acid sequence, 429 residues long: Probable M18 family aminopeptidase 2 (429 aa).

Residues histidine 82, histidine 156, and histidine 401 each contribute to the Zn(2+) site.

Belongs to the peptidase M18 family. Zn(2+) is required as a cofactor.

The chain is Probable M18 family aminopeptidase 2 from Pseudomonas putida (strain ATCC 47054 / DSM 6125 / CFBP 8728 / NCIMB 11950 / KT2440).